A 105-amino-acid chain; its full sequence is U2-lycotoxin-Ls1b (105 aa).

Residues 1-17 form the signal peptide; sequence MIKYVLISALLVVAVYS. A propeptide spanning residues 18–41 is cleaved from the precursor; the sequence is FTIEDNEDALLEEAEDELDTEEER. 4 disulfides stabilise this stretch: Cys51/Cys67, Cys58/Cys97, Cys60/Cys83, and Cys69/Cys81.

This sequence belongs to the neurotoxin 04 (omega-agtx) family. 01 (type I omega-agtx) subfamily. Expressed by the venom gland.

The protein localises to the secreted. Insecticidal to house crickets. It induces an excitatory slow-onset impact that leads to irreversible spastic paralysis. It also modifies human voltage-gated potassium channel Kv1.5/KCNA5. Most likely, it binds to the voltage-sensing domain of the channel, suggesting it does not block the pore but prevents its opening at physiological membrane potentials. The recombinant peptide binds to the channel in an irreversible manner and slows down the hKv1.5 current activation kinetics. It is not toxic to mice, when intracranially injected (at 0.5 ug/g mouse). The polypeptide is U2-lycotoxin-Ls1b (Lycosa singoriensis (Wolf spider)).